The following is a 361-amino-acid chain: Phospho-N-acetylmuramoyl-pentapeptide-transferase (361 aa).

10 helical membrane passes run 28 to 48 (LAVL…IKFL), 74 to 94 (TMGG…LADL), 99 to 119 (IWIT…DDYA), 135 to 155 (LLLQ…TIDS), 167 to 187 (SLSM…IVGA), 203 to 223 (VPIA…GNLI), 236 to 256 (TGEL…FLWF), 263 to 283 (VFMG…ISVI), 288 to 308 (IVLG…IMQV), and 338 to 358 (KVVI…LSSL).

Belongs to the glycosyltransferase 4 family. MraY subfamily. Requires Mg(2+) as cofactor.

Its subcellular location is the cell inner membrane. The enzyme catalyses UDP-N-acetyl-alpha-D-muramoyl-L-alanyl-gamma-D-glutamyl-meso-2,6-diaminopimeloyl-D-alanyl-D-alanine + di-trans,octa-cis-undecaprenyl phosphate = di-trans,octa-cis-undecaprenyl diphospho-N-acetyl-alpha-D-muramoyl-L-alanyl-D-glutamyl-meso-2,6-diaminopimeloyl-D-alanyl-D-alanine + UMP. Its pathway is cell wall biogenesis; peptidoglycan biosynthesis. Catalyzes the initial step of the lipid cycle reactions in the biosynthesis of the cell wall peptidoglycan: transfers peptidoglycan precursor phospho-MurNAc-pentapeptide from UDP-MurNAc-pentapeptide onto the lipid carrier undecaprenyl phosphate, yielding undecaprenyl-pyrophosphoryl-MurNAc-pentapeptide, known as lipid I. This Rickettsia bellii (strain OSU 85-389) protein is Phospho-N-acetylmuramoyl-pentapeptide-transferase.